The primary structure comprises 1337 residues: uncharacterized protein (1337 aa).

Disordered regions lie at residues 1-94 (MPTS…QSSA) and 119-174 (ARDI…PSFF). 2 stretches are compositionally biased toward low complexity: residues 18–37 (SNTS…ASGS) and 68–79 (SSTHFQSSHSVS). Residues 80–94 (NAHNQSPLNQSQSSA) show a composition bias toward polar residues. Over residues 123-147 (PQQPSHSQNPSSSSSSSSSQSSQHS) the composition is skewed to low complexity. The span at 157-167 (NEKKSLDDPSP) shows a compositional bias: basic and acidic residues. The next 6 membrane-spanning stretches (helical) occupy residues 209 to 229 (GLKP…LVLA), 241 to 261 (FFVV…PMLW), 267 to 287 (FLLL…ATVA), 328 to 348 (VRPL…ALFI), 361 to 381 (CVFS…YPYF), and 387 to 407 (LFFI…TLFI). 2 disordered regions span residues 623–662 (SHVR…SHKS) and 868–894 (YDEN…DADH). A compositionally biased stretch (polar residues) spans 626-644 (RTGSNNSEAPLAAKTSTTK). Residues 868–880 (YDENIHNDVDKDM) are compositionally biased toward basic and acidic residues. 6 helical membrane-spanning segments follow: residues 917–937 (MNVF…PAFC), 975–995 (IFGT…GSGH), 997–1017 (LGNA…IQFI), 1021–1041 (FVIL…LTVT), 1066–1086 (FLTV…PQPR), and 1275–1295 (FAVG…IMFI).

The protein localises to the membrane. This is an uncharacterized protein from Schizosaccharomyces pombe (strain 972 / ATCC 24843) (Fission yeast).